A 63-amino-acid chain; its full sequence is Protein BP4A (63 aa).

Pollen specific.

The protein is Protein BP4A (BP4A) of Brassica napus (Rape).